Reading from the N-terminus, the 322-residue chain is Acetyl-coenzyme A carboxylase carboxyl transferase subunit alpha (322 aa).

The CoA carboxyltransferase C-terminal domain occupies 40–297 (PLQKKLGDLR…RETLTRNLEE (258 aa)).

This sequence belongs to the AccA family. Acetyl-CoA carboxylase is a heterohexamer composed of biotin carboxyl carrier protein (AccB), biotin carboxylase (AccC) and two subunits each of ACCase subunit alpha (AccA) and ACCase subunit beta (AccD).

It localises to the cytoplasm. It carries out the reaction N(6)-carboxybiotinyl-L-lysyl-[protein] + acetyl-CoA = N(6)-biotinyl-L-lysyl-[protein] + malonyl-CoA. The protein operates within lipid metabolism; malonyl-CoA biosynthesis; malonyl-CoA from acetyl-CoA: step 1/1. Its function is as follows. Component of the acetyl coenzyme A carboxylase (ACC) complex. First, biotin carboxylase catalyzes the carboxylation of biotin on its carrier protein (BCCP) and then the CO(2) group is transferred by the carboxyltransferase to acetyl-CoA to form malonyl-CoA. This is Acetyl-coenzyme A carboxylase carboxyl transferase subunit alpha from Gemmatimonas aurantiaca (strain DSM 14586 / JCM 11422 / NBRC 100505 / T-27).